We begin with the raw amino-acid sequence, 93 residues long: DNA-directed RNA polymerase subunit omega (93 aa).

This sequence belongs to the RNA polymerase subunit omega family. In terms of assembly, the RNAP catalytic core consists of 2 alpha, 1 beta, 1 beta' and 1 omega subunit. When a sigma factor is associated with the core the holoenzyme is formed, which can initiate transcription.

The enzyme catalyses RNA(n) + a ribonucleoside 5'-triphosphate = RNA(n+1) + diphosphate. Functionally, promotes RNA polymerase assembly. Latches the N- and C-terminal regions of the beta' subunit thereby facilitating its interaction with the beta and alpha subunits. The chain is DNA-directed RNA polymerase subunit omega from Actinobacillus pleuropneumoniae serotype 3 (strain JL03).